Here is a 323-residue protein sequence, read N- to C-terminus: tRNA U34 carboxymethyltransferase (323 aa).

Carboxy-S-adenosyl-L-methionine contacts are provided by residues Lys91, Trp105, Lys110, Gly130, 152–154 (DPT), 181–182 (IE), Met196, Tyr200, and Arg315.

The protein belongs to the class I-like SAM-binding methyltransferase superfamily. CmoB family. In terms of assembly, homotetramer.

It catalyses the reaction carboxy-S-adenosyl-L-methionine + 5-hydroxyuridine(34) in tRNA = 5-carboxymethoxyuridine(34) in tRNA + S-adenosyl-L-homocysteine + H(+). Its function is as follows. Catalyzes carboxymethyl transfer from carboxy-S-adenosyl-L-methionine (Cx-SAM) to 5-hydroxyuridine (ho5U) to form 5-carboxymethoxyuridine (cmo5U) at position 34 in tRNAs. This is tRNA U34 carboxymethyltransferase from Shigella flexneri.